The primary structure comprises 40 residues: Photosystem II reaction center protein J (40 aa).

A helical transmembrane segment spans residues 8–28 (IPLWLIGTLTGILVIGLIGIF).

It belongs to the PsbJ family. As to quaternary structure, PSII is composed of 1 copy each of membrane proteins PsbA, PsbB, PsbC, PsbD, PsbE, PsbF, PsbH, PsbI, PsbJ, PsbK, PsbL, PsbM, PsbT, PsbX, PsbY, PsbZ, Psb30/Ycf12, at least 3 peripheral proteins of the oxygen-evolving complex and a large number of cofactors. It forms dimeric complexes.

The protein resides in the plastid. The protein localises to the chloroplast thylakoid membrane. Functionally, one of the components of the core complex of photosystem II (PSII). PSII is a light-driven water:plastoquinone oxidoreductase that uses light energy to abstract electrons from H(2)O, generating O(2) and a proton gradient subsequently used for ATP formation. It consists of a core antenna complex that captures photons, and an electron transfer chain that converts photonic excitation into a charge separation. This chain is Photosystem II reaction center protein J, found in Phalaenopsis aphrodite subsp. formosana (Moth orchid).